The chain runs to 285 residues: Flagellar filament 30.7 kDa core protein (285 aa).

The protein belongs to the bacterial flagellin family. The core of the flagellum consists of several antigenically related polypeptides. In terms of processing, glycosylated. Glycosylation is not essential for motility.

The protein localises to the periplasmic flagellum. It localises to the periplasm. In terms of biological role, component of the core of the flagella. The sequence is that of Flagellar filament 30.7 kDa core protein (flaB3) from Treponema maltophilum.